A 305-amino-acid polypeptide reads, in one-letter code: GTPase Era (305 aa).

An Era-type G domain is found at 11-181 (RSGFISFVGR…LDVITRLLPE (171 aa)). The segment at 19–26 (GRPNTGKS) is G1. 19–26 (GRPNTGKS) contributes to the GTP binding site. The tract at residues 45–49 (ETTRH) is G2. The segment at 66–69 (DTPG) is G3. GTP-binding positions include 66–70 (DTPGL) and 130–133 (TKVD). The interval 130–133 (TKVD) is G4. Residues 160-162 (VSA) form a G5 region. The region spanning 212-291 (LKDELPHSVA…YLDLRIKVLK (80 aa)) is the KH type-2 domain.

The protein belongs to the TRAFAC class TrmE-Era-EngA-EngB-Septin-like GTPase superfamily. Era GTPase family. Monomer.

The protein resides in the cytoplasm. It is found in the cell membrane. Functionally, an essential GTPase that binds both GDP and GTP, with rapid nucleotide exchange. Plays a role in 16S rRNA processing and 30S ribosomal subunit biogenesis and possibly also in cell cycle regulation and energy metabolism. The sequence is that of GTPase Era from Corynebacterium diphtheriae (strain ATCC 700971 / NCTC 13129 / Biotype gravis).